The chain runs to 179 residues: Large ribosomal subunit protein uL6 (179 aa).

This sequence belongs to the universal ribosomal protein uL6 family. As to quaternary structure, part of the 50S ribosomal subunit.

Functionally, this protein binds to the 23S rRNA, and is important in its secondary structure. It is located near the subunit interface in the base of the L7/L12 stalk, and near the tRNA binding site of the peptidyltransferase center. This is Large ribosomal subunit protein uL6 from Mycobacterium avium (strain 104).